Consider the following 118-residue polypeptide: DNA-binding protein YG5714_1868 (118 aa).

This sequence belongs to the PDCD5 family.

This Saccharolobus islandicus (strain Y.G.57.14 / Yellowstone #1) (Sulfolobus islandicus) protein is DNA-binding protein YG5714_1868.